We begin with the raw amino-acid sequence, 497 residues long: Probable cytosol aminopeptidase (497 aa).

Residues K262 and D267 each contribute to the Mn(2+) site. Residue K274 is part of the active site. Residues D285, D344, and E346 each coordinate Mn(2+). Residue R348 is part of the active site.

This sequence belongs to the peptidase M17 family. It depends on Mn(2+) as a cofactor.

Its subcellular location is the cytoplasm. The catalysed reaction is Release of an N-terminal amino acid, Xaa-|-Yaa-, in which Xaa is preferably Leu, but may be other amino acids including Pro although not Arg or Lys, and Yaa may be Pro. Amino acid amides and methyl esters are also readily hydrolyzed, but rates on arylamides are exceedingly low.. It catalyses the reaction Release of an N-terminal amino acid, preferentially leucine, but not glutamic or aspartic acids.. Functionally, presumably involved in the processing and regular turnover of intracellular proteins. Catalyzes the removal of unsubstituted N-terminal amino acids from various peptides. This is Probable cytosol aminopeptidase from Rhizobium etli (strain ATCC 51251 / DSM 11541 / JCM 21823 / NBRC 15573 / CFN 42).